A 126-amino-acid chain; its full sequence is Holo-[acyl-carrier-protein] synthase (126 aa).

Positions 9 and 58 each coordinate Mg(2+).

This sequence belongs to the P-Pant transferase superfamily. AcpS family. Mg(2+) serves as cofactor.

Its subcellular location is the cytoplasm. It catalyses the reaction apo-[ACP] + CoA = holo-[ACP] + adenosine 3',5'-bisphosphate + H(+). Its function is as follows. Transfers the 4'-phosphopantetheine moiety from coenzyme A to a Ser of acyl-carrier-protein. This chain is Holo-[acyl-carrier-protein] synthase, found in Vibrio atlanticus (strain LGP32) (Vibrio splendidus (strain Mel32)).